The sequence spans 508 residues: Ribonuclease Y (508 aa).

A helical transmembrane segment spans residues 2–22; the sequence is IITALIAIAVGFLIGYLARKI. One can recognise a KH domain in the interval 198–261; the sequence is TVSVVTLPND…EVARIALEKL (64 aa). The HD domain maps to 324–417; it reads VLKHSIEVAH…VQAADAISAA (94 aa).

Belongs to the RNase Y family.

It localises to the cell membrane. Endoribonuclease that initiates mRNA decay. The protein is Ribonuclease Y of Thermoanaerobacter pseudethanolicus (strain ATCC 33223 / 39E) (Clostridium thermohydrosulfuricum).